We begin with the raw amino-acid sequence, 125 residues long: Large ribosomal subunit protein bL17 (125 aa).

It belongs to the bacterial ribosomal protein bL17 family. As to quaternary structure, part of the 50S ribosomal subunit. Contacts protein L32.

This Acinetobacter baumannii (strain AB307-0294) protein is Large ribosomal subunit protein bL17.